The primary structure comprises 280 residues: Diaminopimelate epimerase (280 aa).

Residues asparagine 13 and asparagine 66 each contribute to the substrate site. Cysteine 75 acts as the Proton donor in catalysis. Substrate is bound by residues glycine 76–asparagine 77, asparagine 165, asparagine 198, and glutamate 216–arginine 217. Cysteine 225 acts as the Proton acceptor in catalysis. Position 226–227 (glycine 226–threonine 227) interacts with substrate.

Belongs to the diaminopimelate epimerase family. In terms of assembly, homodimer.

The protein resides in the cytoplasm. It catalyses the reaction (2S,6S)-2,6-diaminopimelate = meso-2,6-diaminopimelate. It functions in the pathway amino-acid biosynthesis; L-lysine biosynthesis via DAP pathway; DL-2,6-diaminopimelate from LL-2,6-diaminopimelate: step 1/1. Its function is as follows. Catalyzes the stereoinversion of LL-2,6-diaminopimelate (L,L-DAP) to meso-diaminopimelate (meso-DAP), a precursor of L-lysine and an essential component of the bacterial peptidoglycan. In Cyanothece sp. (strain PCC 7425 / ATCC 29141), this protein is Diaminopimelate epimerase.